A 428-amino-acid polypeptide reads, in one-letter code: Glutamate-1-semialdehyde 2,1-aminomutase (428 aa).

K266 carries the post-translational modification N6-(pyridoxal phosphate)lysine.

The protein belongs to the class-III pyridoxal-phosphate-dependent aminotransferase family. HemL subfamily. As to quaternary structure, homodimer. Pyridoxal 5'-phosphate is required as a cofactor.

The protein localises to the cytoplasm. The enzyme catalyses (S)-4-amino-5-oxopentanoate = 5-aminolevulinate. It functions in the pathway porphyrin-containing compound metabolism; protoporphyrin-IX biosynthesis; 5-aminolevulinate from L-glutamyl-tRNA(Glu): step 2/2. This is Glutamate-1-semialdehyde 2,1-aminomutase from Herminiimonas arsenicoxydans.